Reading from the N-terminus, the 442-residue chain is Protein UNUSUAL FLORAL ORGANS (442 aa).

An interaction with SKP1A region spans residues 1 to 85 (MDSTVFINNP…RFYSLLFSNT (85 aa)). In terms of domain architecture, F-box spans 44 to 90 (GRIWSKLPPPLLDRVIAFLPPPAFFRTRCVCKRFYSLLFSNTFLETY).

Part of a putative SCF (ASK/Cullin/F-box) ubiquitin ligase complex. Interacts with SKP1A/ASK1, SKP1B/ASK2 and ASK11.

It is found in the nucleus. It functions in the pathway protein modification; protein ubiquitination. In terms of biological role, component of SCF(ASK-cullin-F-box) E3 ubiquitin ligase complexes, which may mediate the ubiquitination and subsequent proteasomal degradation of target proteins. Considered as a meristem identity factor required for normal growth of the young floral meristem. Acts together with LEAFY to positively regulate the B class floral homeotic genes APETALA3 and PISTILLATA. In this way, operates as a region-specific regulator for petal and stamen development. Alternatively, may play a role as a negative regulator of the C class floral homeotic genes. Interacts together with the SKP1-like protein ASK1 to form a ubiquitin E3 ligase complex and could indirectly promote the ubiquitination and degradation of specific proteins controlling the floral primordia development like repressors of B class floral homeotic genes. This is Protein UNUSUAL FLORAL ORGANS (UFO) from Arabidopsis thaliana (Mouse-ear cress).